Consider the following 120-residue polypeptide: Ribosome-binding factor A (120 aa).

This sequence belongs to the RbfA family. As to quaternary structure, monomer. Binds 30S ribosomal subunits, but not 50S ribosomal subunits or 70S ribosomes.

The protein resides in the cytoplasm. Its function is as follows. One of several proteins that assist in the late maturation steps of the functional core of the 30S ribosomal subunit. Associates with free 30S ribosomal subunits (but not with 30S subunits that are part of 70S ribosomes or polysomes). Required for efficient processing of 16S rRNA. May interact with the 5'-terminal helix region of 16S rRNA. The sequence is that of Ribosome-binding factor A from Rickettsia conorii (strain ATCC VR-613 / Malish 7).